The following is a 425-amino-acid chain: Glutamate-1-semialdehyde 2,1-aminomutase (425 aa).

N6-(pyridoxal phosphate)lysine is present on Lys-264.

The protein belongs to the class-III pyridoxal-phosphate-dependent aminotransferase family. HemL subfamily. Homodimer. It depends on pyridoxal 5'-phosphate as a cofactor.

It is found in the cytoplasm. The enzyme catalyses (S)-4-amino-5-oxopentanoate = 5-aminolevulinate. The protein operates within porphyrin-containing compound metabolism; protoporphyrin-IX biosynthesis; 5-aminolevulinate from L-glutamyl-tRNA(Glu): step 2/2. The polypeptide is Glutamate-1-semialdehyde 2,1-aminomutase (Hydrogenobaculum sp. (strain Y04AAS1)).